The chain runs to 418 residues: Putative L-glutamine:3-amino-2,3-dideoxy-scyllo-inosose aminotransferase (418 aa).

Lysine 199 carries the N6-(pyridoxal phosphate)lysine modification.

The protein belongs to the DegT/DnrJ/EryC1 family. L-glutamine:2-deoxy-scyllo-inosose/scyllo-inosose aminotransferase subfamily. It depends on pyridoxal 5'-phosphate as a cofactor.

It catalyses the reaction 3-amino-2,3-dideoxy-scyllo-inosose + L-glutamine = 2-deoxystreptamine + 2-oxoglutaramate. The protein operates within metabolic intermediate biosynthesis; 2-deoxystreptamine biosynthesis; 2-deoxystreptamine from D-glucose 6-phosphate: step 4/4. It functions in the pathway antibiotic biosynthesis; gentamicin biosynthesis. In terms of biological role, catalyzes the transamination of 3-amino-2,3-dideoxy-scyllo-inosose (amino-DOI) into 2-deoxystreptamine (DOS). In Micromonospora echinospora (Micromonospora purpurea), this protein is Putative L-glutamine:3-amino-2,3-dideoxy-scyllo-inosose aminotransferase (gtmD).